The primary structure comprises 371 residues: Glutamate 5-kinase (371 aa).

Residue Lys-14 participates in ATP binding. Substrate is bound by residues Ser-52, Asp-139, and Asn-151. 171 to 172 (SD) contacts ATP. One can recognise a PUA domain in the interval 275–353 (EGRLHLDSGA…ADLAMELGPS (79 aa)).

Belongs to the glutamate 5-kinase family.

It is found in the cytoplasm. It catalyses the reaction L-glutamate + ATP = L-glutamyl 5-phosphate + ADP. Its pathway is amino-acid biosynthesis; L-proline biosynthesis; L-glutamate 5-semialdehyde from L-glutamate: step 1/2. Catalyzes the transfer of a phosphate group to glutamate to form L-glutamate 5-phosphate. The polypeptide is Glutamate 5-kinase (Frankia casuarinae (strain DSM 45818 / CECT 9043 / HFP020203 / CcI3)).